Reading from the N-terminus, the 139-residue chain is Diacylglycerol acyltransferase/mycolyltransferase Ag85A (139 aa).

Catalysis depends on serine 10, which acts as the Nucleophile. Substrate-binding residues include serine 10 and aspartate 38. Glutamate 114 is a catalytic residue. Residues 116-119 (FVRT) and lysine 123 contribute to the substrate site.

Belongs to the mycobacterial A85 antigen family. Homodimer.

Its subcellular location is the secreted. It is found in the cell wall. It localises to the cytoplasm. It catalyses the reaction an acyl-CoA + a 1,2-diacyl-sn-glycerol = a triacyl-sn-glycerol + CoA. The catalysed reaction is 2 alpha,alpha'-trehalose 6-mycolate = alpha,alpha'-trehalose 6,6'-bismycolate + alpha,alpha-trehalose. The antigen 85 proteins (FbpA, FbpB, FbpC) are responsible for the high affinity of mycobacteria for fibronectin, a large adhesive glycoprotein, which facilitates the attachment of M.tuberculosis to murine alveolar macrophages (AMs). They also help to maintain the integrity of the cell wall by catalyzing the transfer of mycolic acids to cell wall arabinogalactan, and through the synthesis of alpha,alpha-trehalose dimycolate (TDM, cord factor). They catalyze the transfer of a mycoloyl residue from one molecule of alpha,alpha-trehalose monomycolate (TMM) to another TMM, leading to the formation of TDM. FbpA mediates triacylglycerol (TAG) formation with long-chain acyl-CoA as the acyl donor and 1,2-dipalmitoyl-sn-glycerol (1,2-dipalmitin) as the acyl acceptor. It has a preference for C26:0-CoA over C18:1-CoA. The chain is Diacylglycerol acyltransferase/mycolyltransferase Ag85A (fbpA) from Mycobacterium marinum.